We begin with the raw amino-acid sequence, 351 residues long: N6-Methyl-AMP deaminase (351 aa).

Positions 23 and 25 each coordinate Zn(2+). Residues H25, N27, H73, 105–108 (STPR), D147, and G180 each bind N(6)-methyl-AMP. H207 is a Zn(2+) binding site. 3 residues coordinate N(6)-methyl-AMP: E210, D292, and D293. The active-site Proton donor is the E210. D292 provides a ligand contact to Zn(2+).

It belongs to the metallo-dependent hydrolases superfamily. Adenosine and AMP deaminases family. In terms of assembly, monomer. It depends on Zn(2+) as a cofactor.

It catalyses the reaction N(6)-methyl-AMP + H2O + H(+) = IMP + methylamine. Catalyzes the hydrolysis of the free cytosolic methylated adenosine nucleotide N(6)-methyl-AMP (N6-mAMP) to produce inositol monophosphate (IMP) and methylamine. Is required for the catabolism of cytosolic N6-mAMP, which is derived from the degradation of mRNA containing N6-methylated adenine (m6A). The protein is N6-Methyl-AMP deaminase of Bos taurus (Bovine).